A 147-amino-acid polypeptide reads, in one-letter code: D-aminoacyl-tRNA deacylase (147 aa).

Residues 136-137 (GP) carry the Gly-cisPro motif, important for rejection of L-amino acids motif.

It belongs to the DTD family. Homodimer.

It localises to the cytoplasm. It carries out the reaction glycyl-tRNA(Ala) + H2O = tRNA(Ala) + glycine + H(+). It catalyses the reaction a D-aminoacyl-tRNA + H2O = a tRNA + a D-alpha-amino acid + H(+). Its function is as follows. An aminoacyl-tRNA editing enzyme that deacylates mischarged D-aminoacyl-tRNAs. Also deacylates mischarged glycyl-tRNA(Ala), protecting cells against glycine mischarging by AlaRS. Acts via tRNA-based rather than protein-based catalysis; rejects L-amino acids rather than detecting D-amino acids in the active site. By recycling D-aminoacyl-tRNA to D-amino acids and free tRNA molecules, this enzyme counteracts the toxicity associated with the formation of D-aminoacyl-tRNA entities in vivo and helps enforce protein L-homochirality. The protein is D-aminoacyl-tRNA deacylase of Streptococcus suis (strain 98HAH33).